The chain runs to 204 residues: SOSS complex subunit B homolog (204 aa).

The segment at residues 24–94 is a DNA-binding region (OB); the sequence is IVLEVGVATV…TLYSGKNGEV (71 aa). The tract at residues 115 to 204 is disordered; sequence RAEQQAVANP…GRGGLKGERR (90 aa). Composition is skewed to low complexity over residues 122–131 and 139–183; these read ANPAATPAGL and GLPA…QTTT. Gly residues predominate over residues 187–198; the sequence is TRGGRGGGGRGG.

Belongs to the SOSS-B family.

The chain is SOSS complex subunit B homolog from Drosophila melanogaster (Fruit fly).